The sequence spans 404 residues: Probable tRNA sulfurtransferase (404 aa).

The region spanning 60 to 165 (TAVAESLKQV…EEAAYLSYET (106 aa)) is the THUMP domain. ATP is bound by residues 183-184 (ML), 208-209 (HF), Arg-265, Gly-287, and Gln-296.

The protein belongs to the ThiI family.

It localises to the cytoplasm. The enzyme catalyses [ThiI sulfur-carrier protein]-S-sulfanyl-L-cysteine + a uridine in tRNA + 2 reduced [2Fe-2S]-[ferredoxin] + ATP + H(+) = [ThiI sulfur-carrier protein]-L-cysteine + a 4-thiouridine in tRNA + 2 oxidized [2Fe-2S]-[ferredoxin] + AMP + diphosphate. It catalyses the reaction [ThiS sulfur-carrier protein]-C-terminal Gly-Gly-AMP + S-sulfanyl-L-cysteinyl-[cysteine desulfurase] + AH2 = [ThiS sulfur-carrier protein]-C-terminal-Gly-aminoethanethioate + L-cysteinyl-[cysteine desulfurase] + A + AMP + 2 H(+). The protein operates within cofactor biosynthesis; thiamine diphosphate biosynthesis. Catalyzes the ATP-dependent transfer of a sulfur to tRNA to produce 4-thiouridine in position 8 of tRNAs, which functions as a near-UV photosensor. Also catalyzes the transfer of sulfur to the sulfur carrier protein ThiS, forming ThiS-thiocarboxylate. This is a step in the synthesis of thiazole, in the thiamine biosynthesis pathway. The sulfur is donated as persulfide by IscS. This is Probable tRNA sulfurtransferase from Streptococcus pneumoniae serotype 19F (strain G54).